The chain runs to 470 residues: Chromosomal replication initiator protein DnaA (470 aa).

A domain I, interacts with DnaA modulators region spans residues 1–89; the sequence is MIESNHVVLW…YNVMVDKTSI (89 aa). Residues 89 to 130 form a domain II region; that stretch reads IPNQTVNLEASNRSTAVTPKSIVGGNKAPSFLKAPAVQDLDP. A domain III, AAA+ region region spans residues 131–348; the sequence is HLNPNYNFEN…GIVIAIMARS (218 aa). ATP contacts are provided by Gly176, Gly178, Lys179, and Thr180. The tract at residues 349 to 470 is domain IV, binds dsDNA; it reads TIFNKEIDLD…EIESLLKKKA (122 aa).

This sequence belongs to the DnaA family. Oligomerizes as a right-handed, spiral filament on DNA at oriC.

The protein localises to the cytoplasm. Plays an essential role in the initiation and regulation of chromosomal replication. ATP-DnaA binds to the origin of replication (oriC) to initiate formation of the DNA replication initiation complex once per cell cycle. Binds the DnaA box (a 9 base pair repeat at the origin) and separates the double-stranded (ds)DNA. Forms a right-handed helical filament on oriC DNA; dsDNA binds to the exterior of the filament while single-stranded (ss)DNA is stabiized in the filament's interior. The ATP-DnaA-oriC complex binds and stabilizes one strand of the AT-rich DNA unwinding element (DUE), permitting loading of DNA polymerase. After initiation quickly degrades to an ADP-DnaA complex that is not apt for DNA replication. Binds acidic phospholipids. The sequence is that of Chromosomal replication initiator protein DnaA from Bacteroides thetaiotaomicron (strain ATCC 29148 / DSM 2079 / JCM 5827 / CCUG 10774 / NCTC 10582 / VPI-5482 / E50).